Consider the following 3381-residue polypeptide: Versican core protein (3381 aa).

The signal sequence occupies residues 1–20 (MLINIKSILWMCSTLIAAHA). Positions 21 to 147 (LQKVNMEKSP…EDTQDTVSLT (127 aa)) constitute an Ig-like V-type domain. 5 disulfides stabilise this stretch: cysteine 44–cysteine 131, cysteine 173–cysteine 244, cysteine 197–cysteine 218, cysteine 271–cysteine 346, and cysteine 295–cysteine 316. Asparagine 57 carries N-linked (GlcNAc...) asparagine glycosylation. 2 Link domains span residues 151–246 (VVFH…YCYV) and 252–348 (DVFH…YCFK). N-linked (GlcNAc...) asparagine glycosylation is found at asparagine 331 and asparagine 352. The tract at residues 349-1336 (PKQNISEATT…IIEVRENKTG (988 aa)) is GAG-alpha (glucosaminoglycan attachment domain). A compositionally biased stretch (polar residues) spans 417–427 (PLTSTHRSATE). Disordered stretches follow at residues 417–437 (PLTS…SMKK) and 603–623 (ESVS…MDHR). O-linked (Xyl...) (chondroitin sulfate) serine glycosylation occurs at serine 660. The segment at 816 to 866 (DNTTSKPLGSTEHVGSPKLPPALITTTGVSGKDKEMPSLTEDGRDEFTRIP) is disordered. Asparagine 817 carries an N-linked (GlcNAc...) asparagine glycan. Residues 846–863 (GKDKEMPSLTEDGRDEFT) show a composition bias toward basic and acidic residues. Asparagine 965 and asparagine 1017 each carry an N-linked (GlcNAc...) asparagine glycan. Basic and acidic residues predominate over residues 1043 to 1052 (EDFLWKEQTP). 2 disordered regions span residues 1043 to 1081 (EDFL…SDGS) and 1218 to 1244 (FSSA…PDEE). Asparagine 1333 carries N-linked (GlcNAc...) asparagine glycosylation. The tract at residues 1337 to 3074 (RMSDFSVSGH…VEGTAVYLPG (1738 aa)) is GAG-beta. Residues 1338-1362 (MSDFSVSGHPIDSESKEDEPCSEET) form a disordered region. The segment covering 1352 to 1362 (SKEDEPCSEET) has biased composition (acidic residues). A glycan (N-linked (GlcNAc...) asparagine) is linked at asparagine 1393. The span at 1417 to 1428 (KDPEAAEARRGQ) shows a compositional bias: basic and acidic residues. Disordered stretches follow at residues 1417–1446 (KDPE…ESDS), 1455–1474 (GLPT…SLEI), and 1484–1512 (TAEP…GPDS). Asparagine 1437 and asparagine 1463 each carry an N-linked (GlcNAc...) asparagine glycan. Serine 1539 and serine 1621 each carry an O-linked (Xyl...) (chondroitin sulfate) serine glycan. The N-linked (GlcNAc...) asparagine glycan is linked to asparagine 1653. The disordered stretch occupies residues 1708-1785 (PPLEETTRKE…ERETTSSTVV (78 aa)). Basic and acidic residues predominate over residues 1712-1721 (ETTRKEEEKG). Polar residues predominate over residues 1726-1738 (ASTVEVHSPTQRL). A compositionally biased stretch (low complexity) spans 1743 to 1761 (SPSELESSSETPPDDSAAA). Residues 1764-1784 (KSFTSQMTPTQSERETTSSTV) are compositionally biased toward polar residues. 2 O-linked (Xyl...) (chondroitin sulfate) serine glycosylation sites follow: serine 1928 and serine 1952. Over residues 1964-1976 (PSVTPTSDLSNHT) the composition is skewed to polar residues. Disordered regions lie at residues 1964–1986 (PSVT…GSTL) and 2041–2126 (EGAI…QSSV). N-linked (GlcNAc...) asparagine glycans are attached at residues asparagine 1974, asparagine 2045, asparagine 2074, and asparagine 2103. Over residues 2065–2075 (STEEGEVKENH) the composition is skewed to basic and acidic residues. Serine 2109 bears the Phosphoserine mark. Residues serine 2240 and serine 2247 are each glycosylated (O-linked (Xyl...) (chondroitin sulfate) serine). N-linked (GlcNAc...) asparagine glycosylation is found at asparagine 2263, asparagine 2290, and asparagine 2356. 3 disordered regions span residues 2338–2388 (EGPF…AETK), 2490–2512 (EQRE…EKAT), and 2594–2615 (TDLD…TQVQ). 2 stretches are compositionally biased toward polar residues: residues 2345-2357 (LTFS…PQNQ) and 2367-2383 (TSRP…ENSV). Residues serine 2607 and serine 2608 each carry the phosphoserine modification. Position 2612 is a phosphothreonine (threonine 2612). Residues asparagine 2623 and asparagine 2641 are each glycosylated (N-linked (GlcNAc...) asparagine). Serine 2714, serine 2715, and serine 2759 each carry an O-linked (Xyl...) (chondroitin sulfate) serine glycan. Positions 2819 to 2893 (PPLSIHLGSG…EPSEDESKPK (75 aa)) are disordered. Residues 2840–2851 (ALPSTDASTPPV) are compositionally biased toward polar residues. Residues asparagine 2919 and asparagine 3052 are each glycosylated (N-linked (GlcNAc...) asparagine). The EGF-like 1 domain occupies 3074 to 3110 (GPDRCKMNPCLNGGTCYPTETSYVCTCVPGYSGDRCE). 11 disulfide bridges follow: cysteine 3078-cysteine 3089, cysteine 3083-cysteine 3098, cysteine 3100-cysteine 3109, cysteine 3116-cysteine 3127, cysteine 3121-cysteine 3136, cysteine 3138-cysteine 3147, cysteine 3154-cysteine 3165, cysteine 3182-cysteine 3274, cysteine 3250-cysteine 3266, cysteine 3281-cysteine 3324, and cysteine 3310-cysteine 3337. Residues 3112–3148 (DFDECHSNPCRNGATCIDGFNTFRCLCLPSYVGALCE) enclose the EGF-like 2; calcium-binding domain. One can recognise a C-type lectin domain in the interval 3161-3275 (FQGQCYKYFA…CNYHLTYTCK (115 aa)). One can recognise a Sushi domain in the interval 3279–3339 (VACGQPPVVE…WAMPKITCLN (61 aa)). Asparagine 3354 and asparagine 3364 each carry an N-linked (GlcNAc...) asparagine glycan. A compositionally biased stretch (polar residues) spans 3355 to 3365 (SSSAKDNSINT). Positions 3355–3381 (SSSAKDNSINTSKHDHRWSRRWQESRR) are disordered.

The protein belongs to the aggrecan/versican proteoglycan family. As to quaternary structure, interacts with FBLN1. Phosphorylated by FAM20C in the extracellular medium. In terms of processing, proteolytically cleaved by ADAMTS5 and ADAMTS15 in the pericellular matrix surrounding myoblasts, facilitating myoblast contact and fusion which is required for skeletal muscle development and regeneration. Cerebral white matter. Isoform V0 and isoform V1 are expressed in the central nervous system, and in a number of mesenchymal and epithelial tissues; the major isoform V2 is restricted to the central nervous system.

It is found in the secreted. Its subcellular location is the extracellular space. It localises to the extracellular matrix. The protein localises to the cell projection. The protein resides in the cilium. It is found in the photoreceptor outer segment. Its subcellular location is the interphotoreceptor matrix. In terms of biological role, may play a role in intercellular signaling and in connecting cells with the extracellular matrix. May take part in the regulation of cell motility, growth and differentiation. Binds hyaluronic acid. The polypeptide is Versican core protein (VCAN) (Bos taurus (Bovine)).